The following is a 497-amino-acid chain: Arabinose import ATP-binding protein AraG (497 aa).

2 ABC transporter domains span residues 6–242 (LRFD…MVGR) and 250–497 (FRPR…ALPA). 38 to 45 (GENGAGKS) contacts ATP.

It belongs to the ABC transporter superfamily. Arabinose importer (TC 3.A.1.2.2) family. The complex is composed of two ATP-binding proteins (AraG), two transmembrane proteins (AraH) and a solute-binding protein (AraF).

The protein resides in the cell inner membrane. The enzyme catalyses L-arabinose(out) + ATP + H2O = L-arabinose(in) + ADP + phosphate + H(+). In terms of biological role, part of the ABC transporter complex AraFGH involved in arabinose import. Responsible for energy coupling to the transport system. The polypeptide is Arabinose import ATP-binding protein AraG (Chromohalobacter salexigens (strain ATCC BAA-138 / DSM 3043 / CIP 106854 / NCIMB 13768 / 1H11)).